Consider the following 91-residue polypeptide: DNA-binding protein HU-beta 2 (91 aa).

Belongs to the bacterial histone-like protein family.

In terms of biological role, histone-like DNA-binding protein which is capable of wrapping DNA to stabilize it, and thus to prevent its denaturation under extreme environmental conditions. The chain is DNA-binding protein HU-beta 2 (hupB2) from Neisseria meningitidis serogroup A / serotype 4A (strain DSM 15465 / Z2491).